A 291-amino-acid polypeptide reads, in one-letter code: Beta-lactamase OXY-1 (291 aa).

The first 24 residues, 1 to 24 (MLKSSWRKTALMAAAAVPLLLASG), serve as a signal peptide directing secretion. The active-site Acyl-ester intermediate is the Ser-73. 237-239 (KTG) lines the substrate pocket.

The protein belongs to the class-A beta-lactamase family.

The catalysed reaction is a beta-lactam + H2O = a substituted beta-amino acid. Its function is as follows. Hydrolyzes broad-spectrum beta-lactam antibiotics. Active against cephalosporins. The chain is Beta-lactamase OXY-1 (bla) from Klebsiella oxytoca.